Reading from the N-terminus, the 245-residue chain is Glutathione S-transferase F4 (245 aa).

One can recognise a GST N-terminal domain in the interval 25–106 (AGYKVHGDPF…YIAYVHSSRG (82 aa)). Residues 35–36 (ST), 64–65 (HK), 77–78 (QV), and 90–91 (ES) contribute to the glutathione site. The GST C-terminal domain maps to 114 to 244 (SHETMATLTM…QEKSWFNKPR (131 aa)).

It belongs to the GST superfamily. Phi family.

The protein resides in the cytoplasm. It is found in the cytosol. The catalysed reaction is RX + glutathione = an S-substituted glutathione + a halide anion + H(+). May be involved in the conjugation of reduced glutathione to a wide number of exogenous and endogenous hydrophobic electrophiles and have a detoxification role against certain herbicides. The sequence is that of Glutathione S-transferase F4 (GSTF4) from Arabidopsis thaliana (Mouse-ear cress).